We begin with the raw amino-acid sequence, 483 residues long: UDP-N-acetylmuramyl-tripeptide synthetase (483 aa).

Residue Ser43 coordinates UDP-N-acetyl-alpha-D-muramoyl-L-alanyl-D-glutamate. Residue Gly116–Thr122 participates in ATP binding. UDP-N-acetyl-alpha-D-muramoyl-L-alanyl-D-glutamate contacts are provided by residues Thr160–Thr161, Ser187, and Arg195. N6-carboxylysine is present on Lys229.

It belongs to the MurCDEF family. MurE subfamily. Post-translationally, carboxylation is probably crucial for Mg(2+) binding and, consequently, for the gamma-phosphate positioning of ATP.

Its subcellular location is the cytoplasm. The protein operates within cell wall biogenesis; peptidoglycan biosynthesis. In terms of biological role, catalyzes the addition of an amino acid to the nucleotide precursor UDP-N-acetylmuramoyl-L-alanyl-D-glutamate (UMAG) in the biosynthesis of bacterial cell-wall peptidoglycan. This Lactococcus lactis subsp. cremoris (strain MG1363) protein is UDP-N-acetylmuramyl-tripeptide synthetase.